Consider the following 316-residue polypeptide: Ribosomal RNA small subunit methyltransferase H (316 aa).

Residues 35–37 (AGH), Asp55, Phe84, Asp105, and Gln112 each bind S-adenosyl-L-methionine.

It belongs to the methyltransferase superfamily. RsmH family.

It localises to the cytoplasm. It catalyses the reaction cytidine(1402) in 16S rRNA + S-adenosyl-L-methionine = N(4)-methylcytidine(1402) in 16S rRNA + S-adenosyl-L-homocysteine + H(+). Functionally, specifically methylates the N4 position of cytidine in position 1402 (C1402) of 16S rRNA. The polypeptide is Ribosomal RNA small subunit methyltransferase H (Streptococcus uberis (strain ATCC BAA-854 / 0140J)).